Here is a 539-residue protein sequence, read N- to C-terminus: Protein lin-14 (539 aa).

Disordered stretches follow at residues 162-230 (PTLP…SNHS) and 262-293 (ETAP…PRKP). 2 stretches are compositionally biased toward polar residues: residues 163-183 (TLPN…GTDD) and 193-214 (SVDS…NQNI). Over residues 274–284 (NGTTNGTAKAG) the composition is skewed to low complexity. The segment at 296–440 (DDIVKIVRNQ…CRRVRHAKKT (145 aa)) is involved in sequence-specific DNA-binding.

Post-translationally, cleaved by caspase ced-3 in vitro. In terms of tissue distribution, high levels in hypodermal, intestinal, body wall muscle, nerve ring, and ventral nerve cord cells of embryos and L1 animals.

It localises to the nucleus. Functionally, heterochronic protein which controls the choice of stage specific cell fates. Involved in the temporal progression of vulval fate patterning, possibly by inhibiting lin-12. Acts as a transcription factor involved in the stage-specific repression of various genes, including insulin/insulin-like growth factor gene ins-33 and neuropeptide-encoding gene nlp-45. Binds to the consensus sequence 5'-[CT]GGA[AG]-3' in the regulatory elements of target genes. Plays a role in governing the developmental timing of male tail tip morphogenesis. Plays a role in controlling the timing of seam cell development during the larval stages. Plays a role in promoting survival at high temperatures in larvae. Involved in maintenance of the architecture of the ventral nerve cord, perhaps acting via modulating expression of the immunoglobulin domain gene zig-4. In terms of biological role, may specify L2 and later cell fates, creating a temporal switch. Its function is as follows. May be involved in specifying L1 cell fates. The sequence is that of Protein lin-14 from Caenorhabditis elegans.